A 95-amino-acid polypeptide reads, in one-letter code: Co-chaperonin GroES (95 aa).

This sequence belongs to the GroES chaperonin family. Heptamer of 7 subunits arranged in a ring. Interacts with the chaperonin GroEL.

The protein localises to the cytoplasm. In terms of biological role, together with the chaperonin GroEL, plays an essential role in assisting protein folding. The GroEL-GroES system forms a nano-cage that allows encapsulation of the non-native substrate proteins and provides a physical environment optimized to promote and accelerate protein folding. GroES binds to the apical surface of the GroEL ring, thereby capping the opening of the GroEL channel. The protein is Co-chaperonin GroES of Stenotrophomonas maltophilia (strain K279a).